We begin with the raw amino-acid sequence, 142 residues long: Large ribosomal subunit protein uL11 (142 aa).

The protein belongs to the universal ribosomal protein uL11 family. Part of the ribosomal stalk of the 50S ribosomal subunit. Interacts with L10 and the large rRNA to form the base of the stalk. L10 forms an elongated spine to which L12 dimers bind in a sequential fashion forming a multimeric L10(L12)X complex. One or more lysine residues are methylated.

In terms of biological role, forms part of the ribosomal stalk which helps the ribosome interact with GTP-bound translation factors. The protein is Large ribosomal subunit protein uL11 of Shewanella piezotolerans (strain WP3 / JCM 13877).